We begin with the raw amino-acid sequence, 330 residues long: Serine/threonine-protein phosphatase PP1-alpha catalytic subunit (330 aa).

An N-acetylserine modification is found at serine 2. 2 positions are modified to phosphoserine: serine 2 and serine 22. 4 residues coordinate Mn(2+): aspartate 64, histidine 66, aspartate 92, and asparagine 124. Residue histidine 125 is the Proton donor of the active site. Mn(2+)-binding residues include histidine 173 and histidine 248. At lysine 305 the chain carries N6-acetyllysine. The residue at position 306 (tyrosine 306) is a Phosphotyrosine. The disordered stretch occupies residues 306–330 (YGQFSGLNPGGRPITPPRNSAKAKK). Threonine 320 carries the phosphothreonine modification. Position 325 is a phosphoserine (serine 325).

This sequence belongs to the PPP phosphatase family. PP-1 subfamily. In terms of assembly, PP1 comprises a catalytic subunit, PPP1CA, PPP1CB or PPP1CC, which is folded into its native form by inhibitor 2 and glycogen synthetase kinase 3, and then complexed to one or several targeting or regulatory subunits. PPP1R12A, PPP1R12B and PPP1R12C mediate binding to myosin. PPP1R3A (in skeletal muscle), PPP1R3B (in liver), PPP1R3C, PPP1R3D and PPP1R3F (in brain) mediate binding to glycogen. Interacts with PPP1R15A and PPP1R15B; the interactions mediate binding to EIF2S1. Part of a complex containing PPP1R15B, PP1 and NCK1/2. Interacts with PPP1R9A, PPP1R9B and PPP1R7. Interacts with YLPM1. Forms a complex with ILF2, ILF3, YLPM1, KHDRBS1, RBMX and NCOA5. Interacts with NOM1 and PPP1R8. Interacts with PPP1R16B. Interacts with RPSA only in the presence of PPP1R16B. Component of the PNUTS-PP1 phosphatase complex, composed of PPP1R10/PNUTS, TOX4, WDR82, and PPP1CA or PPP1CB or PPP1CC. Interacts with PPP1R10/PNUTS and PPP1R8. Interacts with WDR82 in the presence of PPP1R10/PNUTS. Interacts with PPP1R39. transition from mitosis into interphase. Interacts with TRIM28; the interaction dephosphorylates TRIM28 on 'Ser-824' and forms a complex at the p21 promoter site. Interacts with NEK2. Interacts with PHACTR4; which acts as an activator of PP1 activity. Interacts with FER; this promotes phosphorylation at Thr-320. Interacts with BTBD10. Interacts with KCTD20. Interacts with FOXP3. Interacts with CENPA. Interacts with ATG16L1. Found in a complex with PPP1CA, PPP1CC, SHC1 and PEAK1. Interacts with tensin TNS1. Interacts with SAXO4, PPP1R21, PPP1R26, PPP1R27, PPP1R35, PPP1R36, PPP1R37, SH3RF2, ELFN1 and ELFN2. Interacts with TPRN; the interaction results in inhibition of PPC1A phosphatase activity. Interacts with SKA1 (via C-terminus); the interaction is direct and required for the recruitment of PP1 to the kinetochore. Interacts with the KNL1 complex subunit KNL1; the interaction is direct and mutually exclusive with KNL1 binding to microtubules. Component of the SHOC2-MRAS-PP1c (SMP) complex consisting of SHOC2, GTP-bound M-Ras/MRAS and the catalytic subunit of protein phosphatase 1 (either PPP1CA, PPP1CB or PPP1CC). SHOC2 and PP1c preferably bind M-Ras/MRAS, but they also bind K-Ras/KRAS, N-Ras/NRAS and H-Ras/HRAS; these interactions are GTP-dependent and both SHOC2 and PP1c are required to form a stable complex. Interacts with SHOC2 in the absence of Ras GTPases. Mn(2+) is required as a cofactor. Post-translationally, phosphorylated. Dephosphorylated at Thr-320 in the presence of ionizing radiation.

The protein localises to the cytoplasm. It localises to the nucleus. It is found in the nucleoplasm. The protein resides in the nucleolus. It catalyses the reaction O-phospho-L-seryl-[protein] + H2O = L-seryl-[protein] + phosphate. The catalysed reaction is O-phospho-L-threonyl-[protein] + H2O = L-threonyl-[protein] + phosphate. Protein phosphatase that associates with over 200 regulatory proteins to form highly specific holoenzymes which dephosphorylate hundreds of biological targets. Protein phosphatase 1 (PP1) is essential for cell division, transcription elongation, and participates in the regulation of glycogen metabolism, muscle contractility and protein synthesis. Involved in regulation of ionic conductances and long-term synaptic plasticity. May play an important role in dephosphorylating substrates such as the postsynaptic density-associated Ca(2+)/calmodulin dependent protein kinase II. Catalytic component of the PNUTS-PP1 protein phosphatase complex, a protein phosphatase 1 (PP1) complex that promotes RNA polymerase II transcription pause-release, allowing transcription elongation: the PNUTS-PP1 complex mediates the release of RNA polymerase II from promoter-proximal region of genes by catalyzing dephosphorylation of proteins involved in transcription, such as AFF4, CDK9, MEPCE, INTS12, NCBP1, POLR2M/GDOWN1 and SUPT6H. The PNUTS-PP1 complex also regulates transcription termination by mediating dephosphorylation of SUPT5H in termination zones downstream of poly(A) sites, thereby promoting deceleration of RNA polymerase II transcription. PNUTS-PP1 complex is also involved in the response to replication stress by mediating dephosphorylation of POLR2A at 'Ser-5' of the CTD, promoting RNA polymerase II degradation. PNUTS-PP1 also plays a role in the control of chromatin structure and cell cycle progression during the transition from mitosis into interphase. Regulates NEK2 function in terms of kinase activity and centrosome number and splitting, both in the presence and absence of radiation-induced DNA damage. Regulator of neural tube and optic fissure closure, and enteric neural crest cell (ENCCs) migration during development. In balance with CSNK1D and CSNK1E, determines the circadian period length, through the regulation of the speed and rhythmicity of PER1 and PER2 phosphorylation. May dephosphorylate CSNK1D and CSNK1E. Dephosphorylates the 'Ser-418' residue of FOXP3 in regulatory T-cells (Treg) from patients with rheumatoid arthritis, thereby inactivating FOXP3 and rendering Treg cells functionally defective. Dephosphorylates CENPA. Dephosphorylates the 'Ser-139' residue of ATG16L1 causing dissociation of ATG12-ATG5-ATG16L1 complex, thereby inhibiting autophagy. Together with PPP1CC (PP1-gamma subunit), dephosphorylates IFIH1/MDA5 and RIG-I leading to their activation and a functional innate immune response. Core component of the SHOC2-MRAS-PP1c (SMP) holophosphatase complex that regulates the MAPK pathway activation. The SMP complex specifically dephosphorylates the inhibitory phosphorylation at 'Ser-259' of RAF1 kinase, 'Ser-365' of BRAF kinase and 'Ser-214' of ARAF kinase, stimulating their kinase activities. The SMP complex enhances the dephosphorylation activity and substrate specificity of PP1c. The polypeptide is Serine/threonine-protein phosphatase PP1-alpha catalytic subunit (PPP1CA) (Canis lupus familiaris (Dog)).